The chain runs to 232 residues: Sensory rhodopsin III (232 aa).

7 consecutive transmembrane segments (helical) span residues I5–F25, L39–G59, F73–V93, L100–G120, I125–F145, V168–I188, and N194–V214. K205 bears the N6-(retinylidene)lysine mark.

Belongs to the archaeal/bacterial/fungal opsin family. In terms of assembly, interacts with HtrM. In terms of processing, the covalent binding of retinal to the apoprotein, bacterioopsin, generates bacteriorhodopsin.

It is found in the membrane. Its function is as follows. Sensory rhodopsin. Associates with an unusual transducer lacking a methyl-accepting transducer domain found in all other photosensory transducers. The chromophore is all-trans-retinal in the dark. The protein is Sensory rhodopsin III (xop2) of Haloarcula marismortui (strain ATCC 43049 / DSM 3752 / JCM 8966 / VKM B-1809) (Halobacterium marismortui).